A 518-amino-acid polypeptide reads, in one-letter code: Bifunctional purine biosynthesis protein PurH (518 aa).

The MGS-like domain maps to 1–144 (MSKRALISVS…KNHAAVTVVC (144 aa)).

The protein belongs to the PurH family.

The enzyme catalyses (6R)-10-formyltetrahydrofolate + 5-amino-1-(5-phospho-beta-D-ribosyl)imidazole-4-carboxamide = 5-formamido-1-(5-phospho-D-ribosyl)imidazole-4-carboxamide + (6S)-5,6,7,8-tetrahydrofolate. The catalysed reaction is IMP + H2O = 5-formamido-1-(5-phospho-D-ribosyl)imidazole-4-carboxamide. The protein operates within purine metabolism; IMP biosynthesis via de novo pathway; 5-formamido-1-(5-phospho-D-ribosyl)imidazole-4-carboxamide from 5-amino-1-(5-phospho-D-ribosyl)imidazole-4-carboxamide (10-formyl THF route): step 1/1. Its pathway is purine metabolism; IMP biosynthesis via de novo pathway; IMP from 5-formamido-1-(5-phospho-D-ribosyl)imidazole-4-carboxamide: step 1/1. This is Bifunctional purine biosynthesis protein PurH from Lactococcus lactis subsp. cremoris (strain MG1363).